A 619-amino-acid chain; its full sequence is Trihelix transcription factor GTL2 (619 aa).

Disordered stretches follow at residues 11–41 (HRFIASPPPPPPLPPHQPAAERSLPFPVSFS) and 62–100 (HHHHHHHHHDIKDGGATTGEWIGQTDHDDSDNHHQHHHH). Residues 16 to 27 (SPPPPPPLPPHQ) are compositionally biased toward pro residues. The Myb-like 1 domain occupies 102 to 154 (PWCSDEVLALLRFRSTVENWFPEFTWEHTSRKLAEVGFKRSPQECKEKFEEEE). Positions 307–361 (VRNMIAQQEEMHKKLLEDMVKKEEEKIAREEAWKKQEIERVNKEVEIRAQEQAMA) form a coiled coil. Disordered regions lie at residues 382–414 (VVQNPTSPSQDSSSLALRKTQGRRKFQTSSSLL) and 434–458 (STKTLKPKNQNPKPPKSDDKSDLGK). The segment covering 384-396 (QNPTSPSQDSSSL) has biased composition (polar residues). Positions 435–444 (TKTLKPKNQN) are enriched in low complexity. A compositionally biased stretch (basic and acidic residues) spans 448 to 458 (PKSDDKSDLGK). One can recognise a Myb-like 2 domain in the interval 459–526 (RWPKDEVLAL…RCKEKWENIN (68 aa)). The Nuclear localization signal signature appears at 503–510 (SKKMLEIG). Residues 557–619 (SQPPTGTTAT…VQFSGFDLEF (63 aa)) form a disordered region. The segment covering 561–574 (TGTTATTATTATSA) has biased composition (low complexity). Positions 575 to 585 (RDLDTRPEENR) are enriched in basic and acidic residues.

Its subcellular location is the nucleus. Probable transcription factor that binds specific DNA sequence. The sequence is that of Trihelix transcription factor GTL2 from Arabidopsis thaliana (Mouse-ear cress).